We begin with the raw amino-acid sequence, 228 residues long: Small ribosomal subunit protein uS3 (228 aa).

Positions 39-107 constitute a KH type-2 domain; sequence TREYLQDKLK…PVHINIEEIR (69 aa).

This sequence belongs to the universal ribosomal protein uS3 family. Part of the 30S ribosomal subunit. Forms a tight complex with proteins S10 and S14.

Binds the lower part of the 30S subunit head. Binds mRNA in the 70S ribosome, positioning it for translation. The sequence is that of Small ribosomal subunit protein uS3 from Pseudomonas putida (strain ATCC 700007 / DSM 6899 / JCM 31910 / BCRC 17059 / LMG 24140 / F1).